The chain runs to 615 residues: Protease 4 (615 aa).

Over 1–17 (MFQVLKFCWKVLCFIRD) the chain is Cytoplasmic. The chain crosses the membrane as a helical span at residues 18–38 (LVMNVVFLGFVLLLVAIISFS). Over 39–615 (SGGKKSTALT…LYCLNCGKVK (577 aa)) the chain is Periplasmic. The Proton donor/acceptor role is filled by K201. S405 serves as the catalytic Nucleophile.

This sequence belongs to the peptidase S49 family. Homotetramer.

It is found in the cell inner membrane. Its function is as follows. Digests cleaved signal peptides in vitro, its in vivo function is unknown. This activity is necessary to maintain proper secretion of mature proteins across the membrane. In Haemophilus influenzae (strain ATCC 51907 / DSM 11121 / KW20 / Rd), this protein is Protease 4 (sppA).